The sequence spans 228 residues: 7-cyano-7-deazaguanine synthase (228 aa).

Residue 9-19 participates in ATP binding; that stretch reads YSGGLDSTTCM. 4 residues coordinate Zn(2+): Cys-189, Cys-199, Cys-202, and Cys-205.

It belongs to the QueC family. The cofactor is Zn(2+).

The enzyme catalyses 7-carboxy-7-deazaguanine + NH4(+) + ATP = 7-cyano-7-deazaguanine + ADP + phosphate + H2O + H(+). It functions in the pathway purine metabolism; 7-cyano-7-deazaguanine biosynthesis. Catalyzes the ATP-dependent conversion of 7-carboxy-7-deazaguanine (CDG) to 7-cyano-7-deazaguanine (preQ(0)). The polypeptide is 7-cyano-7-deazaguanine synthase (Geotalea uraniireducens (strain Rf4) (Geobacter uraniireducens)).